A 307-amino-acid chain; its full sequence is S-methyl-5'-thioadenosine phosphorylase (307 aa).

Phosphate-binding positions include Thr20, Arg62–His63, and Ser95–Ala96. Met197 contacts substrate. Ser198 contributes to the phosphate binding site. Position 221-223 (Asp221–Asp223) interacts with substrate.

The protein belongs to the PNP/MTAP phosphorylase family. MTAP subfamily. As to quaternary structure, homotrimer.

The protein localises to the cytoplasm. Its subcellular location is the nucleus. The enzyme catalyses S-methyl-5'-thioadenosine + phosphate = 5-(methylsulfanyl)-alpha-D-ribose 1-phosphate + adenine. Its pathway is amino-acid biosynthesis; L-methionine biosynthesis via salvage pathway; S-methyl-5-thio-alpha-D-ribose 1-phosphate from S-methyl-5'-thioadenosine (phosphorylase route): step 1/1. In terms of biological role, catalyzes the reversible phosphorylation of S-methyl-5'-thioadenosine (MTA) to adenine and 5-methylthioribose-1-phosphate. Involved in the breakdown of MTA, a major by-product of polyamine biosynthesis. Responsible for the first step in the methionine salvage pathway after MTA has been generated from S-adenosylmethionine. Has broad substrate specificity with 6-aminopurine nucleosides as preferred substrates. In Fusarium vanettenii (strain ATCC MYA-4622 / CBS 123669 / FGSC 9596 / NRRL 45880 / 77-13-4) (Fusarium solani subsp. pisi), this protein is S-methyl-5'-thioadenosine phosphorylase.